Consider the following 283-residue polypeptide: 5'-nucleotidase SurE 2 (283 aa).

The a divalent metal cation site is built by Asp19, Asp20, Ser52, and Asn110.

This sequence belongs to the SurE nucleotidase family. A divalent metal cation serves as cofactor.

It localises to the cytoplasm. It carries out the reaction a ribonucleoside 5'-phosphate + H2O = a ribonucleoside + phosphate. Functionally, nucleotidase that shows phosphatase activity on nucleoside 5'-monophosphates. In Chlamydia caviae (strain ATCC VR-813 / DSM 19441 / 03DC25 / GPIC) (Chlamydophila caviae), this protein is 5'-nucleotidase SurE 2.